Consider the following 228-residue polypeptide: L-ribulose-5-phosphate 4-epimerase UlaF (228 aa).

Residues 26-27 (GN), 43-44 (SG), and 72-73 (SS) each bind substrate. Residues aspartate 74, histidine 93, and histidine 95 each coordinate Zn(2+). The active-site Proton donor/acceptor is aspartate 118. Residue histidine 167 coordinates Zn(2+). Tyrosine 225 (proton donor/acceptor) is an active-site residue.

It belongs to the aldolase class II family. AraD/FucA subfamily. Zn(2+) serves as cofactor.

It catalyses the reaction L-ribulose 5-phosphate = D-xylulose 5-phosphate. It functions in the pathway cofactor degradation; L-ascorbate degradation; D-xylulose 5-phosphate from L-ascorbate: step 4/4. In terms of biological role, catalyzes the isomerization of L-ribulose 5-phosphate to D-xylulose 5-phosphate. Is involved in the anaerobic L-ascorbate utilization. This chain is L-ribulose-5-phosphate 4-epimerase UlaF, found in Escherichia coli O139:H28 (strain E24377A / ETEC).